Reading from the N-terminus, the 130-residue chain is Transcription antitermination protein NusB (130 aa).

This sequence belongs to the NusB family.

In terms of biological role, involved in transcription antitermination. Required for transcription of ribosomal RNA (rRNA) genes. Binds specifically to the boxA antiterminator sequence of the ribosomal RNA (rrn) operons. This chain is Transcription antitermination protein NusB, found in Macrococcus caseolyticus (strain JCSC5402) (Macrococcoides caseolyticum).